The chain runs to 108 residues: Large ribosomal subunit protein uL23 (108 aa).

It belongs to the universal ribosomal protein uL23 family. Part of the 50S ribosomal subunit. Contacts protein L29, and trigger factor when it is bound to the ribosome.

One of the early assembly proteins it binds 23S rRNA. One of the proteins that surrounds the polypeptide exit tunnel on the outside of the ribosome. Forms the main docking site for trigger factor binding to the ribosome. The polypeptide is Large ribosomal subunit protein uL23 (Polaromonas naphthalenivorans (strain CJ2)).